The following is a 337-amino-acid chain: Phosphatidate cytidylyltransferase, mitochondrial (337 aa).

Belongs to the TAM41 family. Mg(2+) is required as a cofactor.

The protein resides in the mitochondrion inner membrane. The catalysed reaction is a 1,2-diacyl-sn-glycero-3-phosphate + CTP + H(+) = a CDP-1,2-diacyl-sn-glycerol + diphosphate. It functions in the pathway phospholipid metabolism; CDP-diacylglycerol biosynthesis; CDP-diacylglycerol from sn-glycerol 3-phosphate: step 3/3. In terms of biological role, catalyzes the conversion of phosphatidic acid (PA) to CDP-diacylglycerol (CDP-DAG), an essential intermediate in the synthesis of phosphatidylglycerol, cardiolipin and phosphatidylinositol. The chain is Phosphatidate cytidylyltransferase, mitochondrial (Tamm41) from Mus musculus (Mouse).